The primary structure comprises 231 residues: 5'-methylthioadenosine/S-adenosylhomocysteine nucleosidase (231 aa).

E12 functions as the Proton acceptor in the catalytic mechanism. Substrate contacts are provided by residues G78, V153, and 174–175 (ME). The active-site Proton donor is the D198.

This sequence belongs to the PNP/UDP phosphorylase family. MtnN subfamily.

It catalyses the reaction S-adenosyl-L-homocysteine + H2O = S-(5-deoxy-D-ribos-5-yl)-L-homocysteine + adenine. It carries out the reaction S-methyl-5'-thioadenosine + H2O = 5-(methylsulfanyl)-D-ribose + adenine. The catalysed reaction is 5'-deoxyadenosine + H2O = 5-deoxy-D-ribose + adenine. It functions in the pathway amino-acid biosynthesis; L-methionine biosynthesis via salvage pathway; S-methyl-5-thio-alpha-D-ribose 1-phosphate from S-methyl-5'-thioadenosine (hydrolase route): step 1/2. Its function is as follows. Catalyzes the irreversible cleavage of the glycosidic bond in both 5'-methylthioadenosine (MTA) and S-adenosylhomocysteine (SAH/AdoHcy) to adenine and the corresponding thioribose, 5'-methylthioribose and S-ribosylhomocysteine, respectively. Also cleaves 5'-deoxyadenosine, a toxic by-product of radical S-adenosylmethionine (SAM) enzymes, into 5-deoxyribose and adenine. This is 5'-methylthioadenosine/S-adenosylhomocysteine nucleosidase from Vibrio campbellii (strain ATCC BAA-1116).